A 464-amino-acid polypeptide reads, in one-letter code: Cysteine--tRNA ligase (464 aa).

Cys-28 lines the Zn(2+) pocket. The 'HIGH' region signature appears at 30-40 (PTVYDTAHIGN). The Zn(2+) site is built by Cys-212, His-237, and Glu-241. The short motif at 270–274 (KMSKS) is the 'KMSKS' region element. An ATP-binding site is contributed by Lys-273.

Belongs to the class-I aminoacyl-tRNA synthetase family. In terms of assembly, monomer. The cofactor is Zn(2+).

It localises to the cytoplasm. It carries out the reaction tRNA(Cys) + L-cysteine + ATP = L-cysteinyl-tRNA(Cys) + AMP + diphosphate. In Wolbachia pipientis subsp. Culex pipiens (strain wPip), this protein is Cysteine--tRNA ligase.